Here is a 207-residue protein sequence, read N- to C-terminus: Putative acetyltransferase C18B11.09c (207 aa).

It belongs to the transferase hexapeptide repeat family.

The polypeptide is Putative acetyltransferase C18B11.09c (Schizosaccharomyces pombe (strain 972 / ATCC 24843) (Fission yeast)).